We begin with the raw amino-acid sequence, 1248 residues long: Structural maintenance of chromosomes protein 1B (1248 aa).

ATP is bound at residue 32-39; sequence GPNGSGKS. A coiled-coil region spans residues 163-502; it reads EFIGEYEAKK…EGKRQQKRAE (340 aa). The SMC hinge domain maps to 514–629; that stretch reads SVFGRLLDLC…ETVEEARHIA (116 aa). Residues lysine 648, lysine 713, and lysine 1032 each carry the N6-acetyllysine modification. A coiled-coil region spans residues 666–912; the sequence is WDEKELHNLR…REVGKLQKEV (247 aa). Basic and acidic residues predominate over residues 1219 to 1228; it reads PDTEDQEGSR. The segment at 1219–1248 is disordered; that stretch reads PDTEDQEGSRSHRKPRVPRVSMSPKSPQSR.

The protein belongs to the SMC family. SMC1 subfamily. Forms a heterodimer with SMC3. Component of a meiosis-specific cohesin complex, probably composed of the SMC1B and SMC3 heterodimer attached via their SMC hinge domain, RAD21 (or its meiosis-specific related protein REC8), which link them, and STAG3, which interacts with RAD21 or REC8. The cohesin complex interacts with the cohesin loading complex subunits NIPBL/Scc2 (via HEAT repeats) and MAU2/Scc4. NIPBL directly contacts all members of the complex, RAD21, SMC1A/B, SMC3 and STAG1. As to expression, spermatocytes (at protein level). Testis and ovary specific. Not expressed in somatic cells.

Its subcellular location is the nucleus. It is found in the chromosome. The protein resides in the centromere. Functionally, meiosis-specific component of cohesin complex. Required for the maintenance of meiotic cohesion, but not, or only to a minor extent, for its establishment. Contributes to axial element (AE) formation and the organization of chromatin loops along the AE. Plays a key role in synapsis, recombination and chromosome movements. The cohesin complex is required for the cohesion of sister chromatids after DNA replication. The cohesin complex apparently forms a large proteinaceous ring within which sister chromatids can be trapped. At anaphase, the complex is cleaved and dissociates from chromatin, allowing sister chromatids to segregate. The meiosis-specific cohesin complex probably replaces mitosis specific cohesin complex when it dissociates from chromatin during prophase I. The sequence is that of Structural maintenance of chromosomes protein 1B (Smc1b) from Mus musculus (Mouse).